The primary structure comprises 251 residues: Fibroblast growth factor-binding protein 1 (251 aa).

The signal sequence occupies residues 1-20 (MRLHSLILLSFLLLATQAFS). The tract at residues 25–62 (KRAKNAPHSTAEEGVEGSAPSLGKAQNKQRSRTSKSLT) is disordered. Cystine bridges form between Cys-74–Cys-91, Cys-100–Cys-133, and Cys-109–Cys-145. The segment at 160 to 189 (NARGNTKPRKEKAEVSAREHNKVQEAVSTE) is disordered. The segment covering 170-182 (EKAEVSAREHNKV) has biased composition (basic and acidic residues). The O-linked (GalNAc...) serine glycan is linked to Ser-175. The sufficient for interaction with FGF2 and FGF2-induced effects stretch occupies residues 210 to 251 (RDPECLEDPDVLNQRKTALEFCGESWSSICTFFLNMLQATSC). 2 cysteine pairs are disulfide-bonded: Cys-214–Cys-251 and Cys-231–Cys-239.

It belongs to the fibroblast growth factor-binding protein family. As to quaternary structure, found in a complex with FGFBP1, FGF1 and FGF2. Interacts with FGF1, FGF7, FGF10, FGF22 and HSPG2. Interacts with FGF2. Expressed in intestine, ovary, lung, placenta and normal and wounded skin.

Its subcellular location is the secreted. It localises to the extracellular space. It is found in the cell membrane. In terms of biological role, acts as a carrier protein that releases fibroblast-binding factors (FGFs) from the extracellular matrix (EM) storage and thus enhances the mitogenic activity of FGFs. Enhances FGF2 signaling during tissue repair, angiogenesis and in tumor growth. In Mus musculus (Mouse), this protein is Fibroblast growth factor-binding protein 1 (Fgfbp1).